We begin with the raw amino-acid sequence, 396 residues long: Lipid-A-disaccharide synthase (396 aa).

The protein belongs to the LpxB family.

The enzyme catalyses a lipid X + a UDP-2-N,3-O-bis[(3R)-3-hydroxyacyl]-alpha-D-glucosamine = a lipid A disaccharide + UDP + H(+). The protein operates within bacterial outer membrane biogenesis; LPS lipid A biosynthesis. Condensation of UDP-2,3-diacylglucosamine and 2,3-diacylglucosamine-1-phosphate to form lipid A disaccharide, a precursor of lipid A, a phosphorylated glycolipid that anchors the lipopolysaccharide to the outer membrane of the cell. This chain is Lipid-A-disaccharide synthase, found in Hahella chejuensis (strain KCTC 2396).